The sequence spans 294 residues: Cyclin-G1 (294 aa).

Belongs to the cyclin family. Cyclin G subfamily.

The protein resides in the nucleus. In terms of biological role, may play a role in growth regulation. Is associated with G2/M phase arrest in response to DNA damage. May be an intermediate by which p53 mediates its role as an inhibitor of cellular proliferation. The polypeptide is Cyclin-G1 (Ccng1) (Rattus norvegicus (Rat)).